A 320-amino-acid chain; its full sequence is Annexin A5 (320 aa).

Alanine 2 bears the N-acetylalanine mark. Annexin repeat units follow at residues 15 to 86 (FDER…ALMK), 87 to 158 (PSRL…VLLQ), 170 to 242 (AQVE…AVVK), and 246 to 317 (SIPA…LLCG). Lysine 29 participates in a covalent cross-link: Glycyl lysine isopeptide (Lys-Gly) (interchain with G-Cter in SUMO1); alternate. Lysine 29 participates in a covalent cross-link: Glycyl lysine isopeptide (Lys-Gly) (interchain with G-Cter in SUMO2); alternate. A Phosphoserine modification is found at serine 37. An N6-acetyllysine mark is found at lysine 70, lysine 76, lysine 79, lysine 97, and lysine 101. N6-succinyllysine is present on lysine 290. The [IL]-x-C-x-x-[DE] motif motif lies at 314–320 (LLCGGED).

The protein belongs to the annexin family. Monomer. Binds ATRX and EIF5B. S-nitrosylation is induced by interferon-gamma and oxidatively-modified low-densitity lipoprotein (LDL(ox)) possibly implicating the iNOS-S100A8/9 transnitrosylase complex.

Its function is as follows. This protein is an anticoagulant protein that acts as an indirect inhibitor of the thromboplastin-specific complex, which is involved in the blood coagulation cascade. In Macaca fascicularis (Crab-eating macaque), this protein is Annexin A5 (ANXA5).